We begin with the raw amino-acid sequence, 618 residues long: Proline--tRNA ligase (618 aa).

It belongs to the class-II aminoacyl-tRNA synthetase family. ProS type 1 subfamily. As to quaternary structure, homodimer.

Its subcellular location is the cytoplasm. The enzyme catalyses tRNA(Pro) + L-proline + ATP = L-prolyl-tRNA(Pro) + AMP + diphosphate. Functionally, catalyzes the attachment of proline to tRNA(Pro) in a two-step reaction: proline is first activated by ATP to form Pro-AMP and then transferred to the acceptor end of tRNA(Pro). As ProRS can inadvertently accommodate and process non-cognate amino acids such as alanine and cysteine, to avoid such errors it has two additional distinct editing activities against alanine. One activity is designated as 'pretransfer' editing and involves the tRNA(Pro)-independent hydrolysis of activated Ala-AMP. The other activity is designated 'posttransfer' editing and involves deacylation of mischarged Ala-tRNA(Pro). The misacylated Cys-tRNA(Pro) is not edited by ProRS. In Streptococcus equi subsp. equi (strain 4047), this protein is Proline--tRNA ligase.